The chain runs to 525 residues: MANSSIFYKDNESDYESSTVGPDSSRRTSWLSSSFTASPSCSSISHLSNHGLNSYNQSKPHKANQVAWEAMARLRRCCGRAVGLEHFRLLKRLGSGDIGSVYLCQIRGSPETAFYAMKVVDKEAVAVKKKLGRAEMEKKILGMLDHPFCPTLYAAFEASHYSFLVMEYCPGGDLYAVRLRQPSKRFTISSTRFYAAETLVALEYLHMMGIVYRDLKPENVLIREDGHVMLSDFDLSFKCDVVPQFLSDNDRDRGHQEDDDDISIRRKCSTPSCTTTPLNPVISCFSPTSSRRRKKNVVTTTIHENAAGTSDSVKSNDVSRTFSRSPSSCSRVSNGLRDISGGCPSIFAEPINARSKSFVGTHEYLAPEVISGQGHGSAVDWWTYGIFLYEMIFGRTPFKGDNNEKTLVNILKAPLTFPKVIVNSPKEYEDMVNAQDLIIKLLVKNPKKRLGSLKGSIEIKRHEFFEGVNWALIRSIKPPWVPKEETSHKTKGDNRSVNYYLPPRFMMSRKERNEPYHVSNYFDYF.

The segment at 1–27 (MANSSIFYKDNESDYESSTVGPDSSRR) is disordered. The region spanning 87–465 (FRLLKRLGSG…SIEIKRHEFF (379 aa)) is the Protein kinase domain. Residues 93–101 (LGSGDIGSV) and lysine 118 each bind ATP. Residue aspartate 214 is the Proton acceptor of the active site. Positions 466–525 (EGVNWALIRSIKPPWVPKEETSHKTKGDNRSVNYYLPPRFMMSRKERNEPYHVSNYFDYF) constitute an AGC-kinase C-terminal domain.

Belongs to the protein kinase superfamily. Ser/Thr protein kinase family.

It carries out the reaction L-seryl-[protein] + ATP = O-phospho-L-seryl-[protein] + ADP + H(+). The enzyme catalyses L-threonyl-[protein] + ATP = O-phospho-L-threonyl-[protein] + ADP + H(+). Serine/threonine-protein kinase involved in the regulation of auxin signaling. Plays a minor role in the regulation of cellular auxin efflux and cotyledon organogenesis. In Arabidopsis thaliana (Mouse-ear cress), this protein is Protein kinase PINOID 2 (PID2).